We begin with the raw amino-acid sequence, 169 residues long: Cytochrome c oxidase subunit 4 isoform 1, mitochondrial (169 aa).

Residues 1 to 22 (MLATRVFSLVGKRAISTSVCVR) constitute a mitochondrion transit peptide. Residues 23–98 (AHESVVKSED…SFAEMNRGSN (76 aa)) are Mitochondrial matrix-facing. Position 29 is an N6-acetyllysine; alternate (Lys-29). The residue at position 29 (Lys-29) is an N6-succinyllysine; alternate. N6-acetyllysine is present on Lys-53. Residues Ser-56 and Ser-58 each carry the phosphoserine modification. An N6-acetyllysine; alternate modification is found at Lys-60. The residue at position 60 (Lys-60) is an N6-succinyllysine; alternate. N6-acetyllysine is present on Lys-67. A helical transmembrane segment spans residues 99-124 (EWKTVVGGAMFFIGFTALVIMWQKHY). The Mitochondrial intermembrane segment spans residues 125–169 (VYGPLPQSFDKEWVAKQTKRMLDMKVNPIQGLASKWDYEKNEWKK).

The protein belongs to the cytochrome c oxidase IV family. In terms of assembly, component of the cytochrome c oxidase (complex IV, CIV), a multisubunit enzyme composed of 14 subunits. The complex is composed of a catalytic core of 3 subunits MT-CO1, MT-CO2 and MT-CO3, encoded in the mitochondrial DNA, and 11 supernumerary subunits COX4I1 (or COX4I2), COX5A, COX5B, COX6A1 (or COX6A2), COX6B1 (or COX6B2), COX6C, COX7A2 (or COX7A1), COX7B, COX7C, COX8A and NDUFA4, which are encoded in the nuclear genome. The complex exists as a monomer or a dimer and forms supercomplexes (SCs) in the inner mitochondrial membrane with NADH-ubiquinone oxidoreductase (complex I, CI) and ubiquinol-cytochrome c oxidoreductase (cytochrome b-c1 complex, complex III, CIII), resulting in different assemblies (supercomplex SCI(1)III(2)IV(1) and megacomplex MCI(2)III(2)IV(2)). Interacts with AFG1L. Interacts with PHB2; the interaction decreases in absence of SPHK2. Interacts with ABCB7; this interaction allows the regulation of cellular iron homeostasis and cellular reactive oxygen species (ROS) levels in cardiomyocytes. Interacts with FLVCR2; this interaction occurs in the absence of heme and is disrupted upon heme binding. Interacts with IRGC. In terms of tissue distribution, ubiquitous.

The protein localises to the mitochondrion inner membrane. Its pathway is energy metabolism; oxidative phosphorylation. Component of the cytochrome c oxidase, the last enzyme in the mitochondrial electron transport chain which drives oxidative phosphorylation. The respiratory chain contains 3 multisubunit complexes succinate dehydrogenase (complex II, CII), ubiquinol-cytochrome c oxidoreductase (cytochrome b-c1 complex, complex III, CIII) and cytochrome c oxidase (complex IV, CIV), that cooperate to transfer electrons derived from NADH and succinate to molecular oxygen, creating an electrochemical gradient over the inner membrane that drives transmembrane transport and the ATP synthase. Cytochrome c oxidase is the component of the respiratory chain that catalyzes the reduction of oxygen to water. Electrons originating from reduced cytochrome c in the intermembrane space (IMS) are transferred via the dinuclear copper A center (CU(A)) of subunit 2 and heme A of subunit 1 to the active site in subunit 1, a binuclear center (BNC) formed by heme A3 and copper B (CU(B)). The BNC reduces molecular oxygen to 2 water molecules using 4 electrons from cytochrome c in the IMS and 4 protons from the mitochondrial matrix. The protein is Cytochrome c oxidase subunit 4 isoform 1, mitochondrial of Homo sapiens (Human).